The chain runs to 235 residues: MLKITAIPALQDNYIWAIQQGQEVMIVDPAQADPVFHFLAKNKLNLTTILITHYHQDHIGGIAGLQATYPDLTIYGSHEVAQYVNHIVQAGDHLHLLNSDVEVINSAGHTAQHISFLFAQQYLFCGDALFSAGCGRVFTGDYQAQFNTLQRFKTLPESTLVFPAHEYTLTNLKFAASVLPNNNDIREAQARAETLRAQQQPTLPSTIKQELRINPFLQADNLAEFITLRQQKDQY.

The Zn(2+) site is built by His53, His55, Asp57, His58, His109, Asp127, and His165.

The protein belongs to the metallo-beta-lactamase superfamily. Glyoxalase II family. In terms of assembly, monomer. Zn(2+) serves as cofactor.

The catalysed reaction is an S-(2-hydroxyacyl)glutathione + H2O = a 2-hydroxy carboxylate + glutathione + H(+). It functions in the pathway secondary metabolite metabolism; methylglyoxal degradation; (R)-lactate from methylglyoxal: step 2/2. Thiolesterase that catalyzes the hydrolysis of S-D-lactoyl-glutathione to form glutathione and D-lactic acid. In Haemophilus ducreyi (strain 35000HP / ATCC 700724), this protein is Hydroxyacylglutathione hydrolase.